The chain runs to 1313 residues: Kinesin-like protein KIN-12B (1313 aa).

The segment at 1 to 74 is disordered; the sequence is MKHFMMPRNA…PPRPPSSNPL (74 aa). Polar residues predominate over residues 17 to 26; it reads ESQSPNPSLT. The Kinesin motor domain maps to 96–431; that stretch reads GVKVIVRMKP…LRFAQRAKAI (336 aa). Residue 170 to 177 participates in ATP binding; it reads GQTGSGKT. Microtubules-binding stretches follow at residues 298 to 302, 331 to 337, and 380 to 384; these read SSRSH, VDLAGSE, and HIPYR. A neck region spans residues 429–467; that stretch reads KAIQNKAIVNEVMQDDVNFLREVIRQLRDELQRVKDDKG. Residues 685–709 form a disordered region; it reads ESASPKIRNSRKSLRTTSMSTASQK. The span at 699–708 shows a compositional bias: polar residues; the sequence is RTTSMSTASQ. 3 coiled-coil regions span residues 932 to 1003, 1062 to 1130, and 1167 to 1241; these read LDEE…YTDS, AEEL…RIRE, and EKEV…TEIS.

Belongs to the TRAFAC class myosin-kinesin ATPase superfamily. Kinesin family. KIN-12 subfamily. In terms of assembly, homodimer and heterodimer with KIN12A. Interacts with TIO.

The protein localises to the cytoplasm. Its subcellular location is the cytoskeleton. It is found in the phragmoplast. Plus-end directed kinesin-like motor enzyme that plays a critical role in the organization of phragmoplast microtubules during cytokinesis. Constitutes a signaling module in association with serine/threonine-protein kinase TIO that is required to support phragmoplast expansion and cell-plate growth in plant cells. The sequence is that of Kinesin-like protein KIN-12B from Arabidopsis thaliana (Mouse-ear cress).